The following is a 442-amino-acid chain: Proline--tRNA ligase (442 aa).

The protein belongs to the class-II aminoacyl-tRNA synthetase family. ProS type 2 subfamily. In terms of assembly, homodimer.

Its subcellular location is the cytoplasm. It carries out the reaction tRNA(Pro) + L-proline + ATP = L-prolyl-tRNA(Pro) + AMP + diphosphate. Its function is as follows. Catalyzes the attachment of proline to tRNA(Pro) in a two-step reaction: proline is first activated by ATP to form Pro-AMP and then transferred to the acceptor end of tRNA(Pro). This Brucella abortus (strain S19) protein is Proline--tRNA ligase.